Here is a 299-residue protein sequence, read N- to C-terminus: Probable lipid kinase YegS (299 aa).

The region spanning 2-133 is the DAGKc domain; it reads AEFPASLLIL…IDMAQVNKQT (132 aa). ATP is bound by residues threonine 40, 66 to 72, and threonine 95; that span reads GDGTINE. The Mg(2+) site is built by leucine 215, aspartate 218, and leucine 220. The Proton acceptor role is filled by glutamate 271.

Belongs to the diacylglycerol/lipid kinase family. YegS lipid kinase subfamily. The cofactor is Mg(2+). It depends on Ca(2+) as a cofactor.

It is found in the cytoplasm. Its function is as follows. Probably phosphorylates lipids; the in vivo substrate is unknown. The protein is Probable lipid kinase YegS of Escherichia coli O45:K1 (strain S88 / ExPEC).